The primary structure comprises 219 residues: Probable GTP-binding protein EngB (219 aa).

The 175-residue stretch at 26–200 (EGVEIAFAGR…RAKLDTWFAP (175 aa)) folds into the EngB-type G domain. GTP contacts are provided by residues 34–41 (GRSNAGKS), 61–65 (GRTQL), 79–82 (DLPG), 146–149 (TKAD), and 179–181 (FSS). Residues Ser41 and Thr63 each contribute to the Mg(2+) site.

Belongs to the TRAFAC class TrmE-Era-EngA-EngB-Septin-like GTPase superfamily. EngB GTPase family. Requires Mg(2+) as cofactor.

In terms of biological role, necessary for normal cell division and for the maintenance of normal septation. The sequence is that of Probable GTP-binding protein EngB from Vibrio parahaemolyticus serotype O3:K6 (strain RIMD 2210633).